The sequence spans 100 residues: NADH-quinone oxidoreductase subunit K (100 aa).

The next 3 helical transmembrane spans lie at 2 to 22, 28 to 48, and 63 to 83; these read ISLNHYLLLCVILFCIGLFGI, ILMLFFSTEILLNAINIGFVA, and LFIIAIAASEIAVGLGLVVIW.

The protein belongs to the complex I subunit 4L family. As to quaternary structure, NDH-1 is composed of 14 different subunits. Subunits NuoA, H, J, K, L, M, N constitute the membrane sector of the complex.

The protein localises to the cell inner membrane. The catalysed reaction is a quinone + NADH + 5 H(+)(in) = a quinol + NAD(+) + 4 H(+)(out). In terms of biological role, NDH-1 shuttles electrons from NADH, via FMN and iron-sulfur (Fe-S) centers, to quinones in the respiratory chain. The immediate electron acceptor for the enzyme in this species is believed to be ubiquinone. Couples the redox reaction to proton translocation (for every two electrons transferred, four hydrogen ions are translocated across the cytoplasmic membrane), and thus conserves the redox energy in a proton gradient. This Helicobacter hepaticus (strain ATCC 51449 / 3B1) protein is NADH-quinone oxidoreductase subunit K.